Here is a 1399-residue protein sequence, read N- to C-terminus: DNA-directed RNA polymerase subunit beta' (1399 aa).

Zn(2+) is bound by residues cysteine 71, cysteine 73, cysteine 86, and cysteine 89. Residues aspartate 462, aspartate 464, and aspartate 466 each contribute to the Mg(2+) site. Zn(2+) contacts are provided by cysteine 810, cysteine 884, cysteine 891, and cysteine 894.

This sequence belongs to the RNA polymerase beta' chain family. The RNAP catalytic core consists of 2 alpha, 1 beta, 1 beta' and 1 omega subunit. When a sigma factor is associated with the core the holoenzyme is formed, which can initiate transcription. It depends on Mg(2+) as a cofactor. Zn(2+) is required as a cofactor.

It carries out the reaction RNA(n) + a ribonucleoside 5'-triphosphate = RNA(n+1) + diphosphate. DNA-dependent RNA polymerase catalyzes the transcription of DNA into RNA using the four ribonucleoside triphosphates as substrates. This is DNA-directed RNA polymerase subunit beta' from Nitrobacter winogradskyi (strain ATCC 25391 / DSM 10237 / CIP 104748 / NCIMB 11846 / Nb-255).